The primary structure comprises 145 residues: D-aminoacyl-tRNA deacylase (145 aa).

The Gly-cisPro motif, important for rejection of L-amino acids signature appears at 137 to 138 (GP).

It belongs to the DTD family. In terms of assembly, homodimer.

It localises to the cytoplasm. It carries out the reaction glycyl-tRNA(Ala) + H2O = tRNA(Ala) + glycine + H(+). It catalyses the reaction a D-aminoacyl-tRNA + H2O = a tRNA + a D-alpha-amino acid + H(+). An aminoacyl-tRNA editing enzyme that deacylates mischarged D-aminoacyl-tRNAs. Also deacylates mischarged glycyl-tRNA(Ala), protecting cells against glycine mischarging by AlaRS. Acts via tRNA-based rather than protein-based catalysis; rejects L-amino acids rather than detecting D-amino acids in the active site. By recycling D-aminoacyl-tRNA to D-amino acids and free tRNA molecules, this enzyme counteracts the toxicity associated with the formation of D-aminoacyl-tRNA entities in vivo and helps enforce protein L-homochirality. The chain is D-aminoacyl-tRNA deacylase from Dinoroseobacter shibae (strain DSM 16493 / NCIMB 14021 / DFL 12).